A 252-amino-acid polypeptide reads, in one-letter code: Probable ABC transporter ATP-binding protein p29 (252 aa).

Residues 8 to 252 (LEIKNLTFKN…NILDQVFKND (245 aa)) form the ABC transporter domain. Position 42–49 (42–49 (GSSGQGKS)) interacts with ATP.

Belongs to the ABC transporter superfamily.

Part of a high-affinity transport system. The polypeptide is Probable ABC transporter ATP-binding protein p29 (Mesomycoplasma hyorhinis (Mycoplasma hyorhinis)).